Here is a 115-residue protein sequence, read N- to C-terminus: Thionin-like protein 2 (115 aa).

Residues 1-20 form the signal peptide; sequence MLVAVMIVMVIGNLLAQTAA.

Belongs to the plant thionin (TC 1.C.44) family. Is disulfide-linked.

It is found in the secreted. May be involved in plant defense. This chain is Thionin-like protein 2, found in Arabidopsis thaliana (Mouse-ear cress).